A 320-amino-acid polypeptide reads, in one-letter code: Cell-cell adhesion glycoprotein 64 (320 aa).

The first 19 residues, 1 to 19 (MNKFITLFVLLASVSVAMS), serve as a signal peptide directing secretion. 9 cysteine pairs are disulfide-bonded: cysteine 39–cysteine 57, cysteine 67–cysteine 79, cysteine 73–cysteine 86, cysteine 98–cysteine 110, cysteine 104–cysteine 115, cysteine 123–cysteine 138, cysteine 132–cysteine 147, cysteine 157–cysteine 171, and cysteine 165–cysteine 176. The N-linked (GlcNAc...) asparagine glycan is linked to asparagine 49. An N-linked (GlcNAc...) asparagine glycan is attached at asparagine 80. N-linked (GlcNAc...) asparagine glycosylation is found at asparagine 141 and asparagine 158. Residue asparagine 187 is glycosylated (N-linked (GlcNAc...) asparagine). 2 disulfide bridges follow: cysteine 188-cysteine 202 and cysteine 194-cysteine 207. Residue asparagine 216 is glycosylated (N-linked (GlcNAc...) asparagine). 4 cysteine pairs are disulfide-bonded: cysteine 226-cysteine 246, cysteine 232-cysteine 234, cysteine 266-cysteine 285, and cysteine 270-cysteine 281. Serine 298 carries GPI-like-anchor amidated serine lipidation. Positions 299–320 (SATTIAFNAFVVFAIVLSVLLF) are cleaved as a propeptide — removed in mature form.

In terms of processing, contains 18 disulfide bonds. Post-translationally, the GPI-like-anchor contains a phosphoceramide group, rather than a phosphatidyl group.

The protein resides in the cell membrane. Cell-cell adhesion during development. In Heterostelium pallidum (Cellular slime mold), this protein is Cell-cell adhesion glycoprotein 64.